The sequence spans 335 residues: MAVRFLFEALQKAIDEEMEREKRVVLIGEDIGHYGGSYKVTQGLYGKYGKHRVIDTPIAEYSFVGAAVGAAATGLIPVVEGMNMAFILLAYSQISNNMGMLCATSGGHFQVPMVLRGPGGIGKQLGAEHSQRLESYFQSVPGLQIVTCSTPYNAKGLLKSAIRSKNPILFIEHVLLYNLKGEVPDNDYLLPLEKAELVREGSDITVLTYSRQRYNVIQAVKVLVEEGYDPEVIDLISLKPFDMETIGKSIQKTHKVLIVEECMMTGGISNVLQSLIIDNFFDALDAAPLILSSPNVPTPYTGPLEEATVVQTIDIIESIEYGITGKPPKPRTAKK.

Residue E60 participates in thiamine diphosphate binding. The K(+) site is built by A161, I162, and N166.

As to quaternary structure, heterodimer of an alpha and a beta chain. Thiamine diphosphate is required as a cofactor.

The protein localises to the plastid. Its subcellular location is the chloroplast. The catalysed reaction is N(6)-[(R)-lipoyl]-L-lysyl-[protein] + pyruvate + H(+) = N(6)-[(R)-S(8)-acetyldihydrolipoyl]-L-lysyl-[protein] + CO2. The pyruvate dehydrogenase complex catalyzes the overall conversion of pyruvate to acetyl-CoA and CO(2). It contains multiple copies of three enzymatic components: pyruvate dehydrogenase (E1), dihydrolipoamide acetyltransferase (E2) and lipoamide dehydrogenase (E3). The polypeptide is Pyruvate dehydrogenase E1 component subunit beta (pdhB) (Chlorokybus atmophyticus (Soil alga)).